The sequence spans 529 residues: MPTFVDRVVLHATAGDGGHGCASIHREKFKPLGGPDGGDGGRGGDVRLVVDPSVTTLLDFHFHPHQRASRGRPGQGSNRHGADGADLVLPVPDGTVVLTEDGEQIIDLVGPGSAFVLARGGRGGRGNAALASARRKAPGFAELGEPGEQLDAVLELKTVADVALVGFPSAGKSSLVSVLSAAKPKIADYPFTTLVPNLGVAQAGDRPPYTVADVPGLIPGASEGRGLGLEFLRHIERCSVIVHVLDCATLEPGRDPMTDLDVIEAELAAYSADLSDRPRLVVLNKIDVPDAAELAELVAPELRARDLAVFAVSTATRRGVHALSLALADLVAQHRAAAPARAATRIVLRPRAVNEPDFTVRPLGDGFLITGSKPERWVRQTDFTNDEAIGFLADRLARLGVEKELARLGATAGAEVTIGEVTFDWEPTLSGGGLGNGGLGVDDHPGGDGLAETGPGGRGPAGTAASGAAPSPGRGGDTGSSVSLGPRGTDDRLRASVRLTRAERMARRAAAVVDPAVRGEPAGRGEEEG.

One can recognise an Obg domain in the interval 2–159; it reads PTFVDRVVLH…LDAVLELKTV (158 aa). Positions 62–86 are disordered; sequence FHPHQRASRGRPGQGSNRHGADGAD. An OBG-type G domain is found at 160 to 332; sequence ADVALVGFPS…LSLALADLVA (173 aa). Residues 166-173, 191-195, 213-216, 284-287, and 313-315 contribute to the GTP site; these read GFPSAGKS, FTTLV, DVPG, NKID, and STA. Positions 173 and 193 each coordinate Mg(2+). One can recognise an OCT domain in the interval 350 to 427; it reads PRAVNEPDFT…IGEVTFDWEP (78 aa). Disordered stretches follow at residues 434 to 494 and 506 to 529; these read LGNG…DRLR and ARRAAAVVDPAVRGEPAGRGEEEG. Composition is skewed to low complexity over residues 461 to 472 and 508 to 520; these read AGTAASGAAPSP and RAAAVVDPAVRGE.

The protein belongs to the TRAFAC class OBG-HflX-like GTPase superfamily. OBG GTPase family. As to quaternary structure, monomer. It depends on Mg(2+) as a cofactor.

The protein resides in the cytoplasm. An essential GTPase which binds GTP, GDP and possibly (p)ppGpp with moderate affinity, with high nucleotide exchange rates and a fairly low GTP hydrolysis rate. Plays a role in control of the cell cycle, stress response, ribosome biogenesis and in those bacteria that undergo differentiation, in morphogenesis control. The protein is GTPase Obg of Frankia casuarinae (strain DSM 45818 / CECT 9043 / HFP020203 / CcI3).